We begin with the raw amino-acid sequence, 198 residues long: Dual specificity protein phosphatase 14 (198 aa).

Residues 26-167 (GIAQITSSLF…LIDYERQLFG (142 aa)) enclose the Tyrosine-protein phosphatase domain. Cys-111 functions as the Phosphocysteine intermediate in the catalytic mechanism.

Belongs to the protein-tyrosine phosphatase family. Non-receptor class dual specificity subfamily. In terms of assembly, interacts with CD28.

The enzyme catalyses O-phospho-L-tyrosyl-[protein] + H2O = L-tyrosyl-[protein] + phosphate. It carries out the reaction O-phospho-L-seryl-[protein] + H2O = L-seryl-[protein] + phosphate. It catalyses the reaction O-phospho-L-threonyl-[protein] + H2O = L-threonyl-[protein] + phosphate. Involved in the inactivation of MAP kinases. Dephosphorylates ERK, JNK and p38 MAP-kinases. Plays a negative role in TCR signaling by dephosphorylating MAP3K7 adapter TAB1 leading to its inactivation. This Bos taurus (Bovine) protein is Dual specificity protein phosphatase 14 (DUSP14).